The sequence spans 214 residues: Putative AgrB-like protein 2 (214 aa).

Transmembrane regions (helical) follow at residues 41-61, 83-103, 109-129, 154-174, and 179-199; these read IISVLILGLVFNIALEALIFL, TLLGIIISICIGFLIKSSFFA, LVVFIGIVIFVFGYFIVFKFA, ILTIYLFIEVLSIILYYNSGW, and PVMLSIIFGVAWQCMTLTYIG.

Belongs to the AgrB family.

It is found in the cell membrane. Functionally, may be involved in the proteolytic processing of a quorum sensing system signal molecule precursor. This chain is Putative AgrB-like protein 2, found in Clostridium perfringens (strain 13 / Type A).